Here is a 527-residue protein sequence, read N- to C-terminus: MSQDTEVDMKDVELNELEPEKQPMNAADGAAAGEKNGLVKIKVAEDEAEAGVKFTGLSKEELLKVAGSPGWVRTRWALLLLFWLGWLGMLAGAVVIIVRAPRCRELPVQRWWHKGALYRIGDLQAFVGPEARGIAGLKNHLEYLSTLKVKGLVLGPIHKNQKDEVNETDLKQIDPDLGSQEDFKDLLQSAKKKSIHIILDLTPNYKGQNAWFLPPQADIVATKMKEALSSWLQDGVDGFQVRDVGKLANASLYLAEWQNITKNFSEDRLLIAGTASSDLQQIVNILESTSDLLLTSSYLSQPVFTGEHAELLVIKYLNATGSRWCSWSVSQAGLLTSFIPAQFLRLYQLLLFTLPGTPVFSYGDELGLQAVALPGQPMEAPFMLWNESSNSQTSSPVSLNMTVKGQNEDPGSLLTQFRRLSDLRGKERSLLHGDFDALSSSSGLFSYVRHWDQNERYLVVLNFQDVGLSARVGASNLPAGISLPASANLLLSTDSTRLSREEGTSLSLENLSLNPYEGLLLQFPFVA.

The interval 1-31 (MSQDTEVDMKDVELNELEPEKQPMNAADGAA) is disordered. At 1–75 (MSQDTEVDMK…AGSPGWVRTR (75 aa)) the chain is on the cytoplasmic side. Residue serine 2 is modified to Phosphoserine. The residue at position 5 (threonine 5) is a Phosphothreonine. Positions 7 to 21 (VDMKDVELNELEPEK) are enriched in basic and acidic residues. A Glycyl lysine isopeptide (Lys-Gly) (interchain with G-Cter in ubiquitin) cross-link involves residue lysine 42. Serine 58 is subject to Phosphoserine. Residue lysine 59 forms a Glycyl lysine isopeptide (Lys-Gly) (interchain with G-Cter in SUMO2) linkage. Residues 76-98 (WALLLLFWLGWLGMLAGAVVIIV) form a helical; Signal-anchor for type II membrane protein membrane-spanning segment. The Extracellular segment spans residues 99–527 (RAPRCRELPV…GLLLQFPFVA (429 aa)). 4 N-linked (GlcNAc...) asparagine glycosylation sites follow: asparagine 166, asparagine 249, asparagine 259, and asparagine 263. Serine 300 carries the post-translational modification Phosphoserine. 3 N-linked (GlcNAc...) asparagine glycosylation sites follow: asparagine 318, asparagine 386, and asparagine 400. Serine 421 carries the phosphoserine modification. N-linked (GlcNAc...) asparagine glycosylation occurs at asparagine 510.

Belongs to the SLC3A transporter family. In terms of assembly, disulfide-linked heterodimer with a non-glycosylated light chain (SLC7A5, SLC7A6, SLC7A7, SLC7A8, SLC7A10 or SLC7A11). Interacts with TLCD3A/CT120 and ICAM1. Constitutively and specifically associates with beta-1 integrins (alpha-2/beta-1, alpha-3/beta-1, alpha-5/beta-1 and alpha-6/beta-1), but minimally with alpha-4/beta-1. Interacts with LAPTM4B; recruits SLC3A2 and SLC7A5 to lysosomes to promote leucine uptake into these organelles and is required for mTORC1 activation. In terms of processing, phosphorylation on Ser-300 and on Ser-421 by ecto-protein kinases favors heterotypic cell-cell interactions. N-glycosylated; N-glycosylation is crucial for trafficking and stability of SLC3A2 to the plasma membrane. As to expression, in brain expressed on capillary endothelia in cerebral cortex (at protein level). Highest expression in kidney, jejunum, ileum, colon, placenta, testis and spleen. Lower levels found in liver, lung and brain with weakest expression in heart. Expressed in retina, inner blood-retinal barrier of retina, retinal vascular endothelial cells. Also expressed in C6 glioma cells and in the retinal capillary endothelial cell line TR-iBRB2.

Its subcellular location is the apical cell membrane. The protein localises to the cell membrane. The protein resides in the cell junction. It is found in the lysosome membrane. It localises to the melanosome. Its subcellular location is the basolateral cell membrane. Functionally, acts as a chaperone that facilitates biogenesis and trafficking of functional transporters heterodimers to the plasma membrane. Forms heterodimer with SLC7 family transporters (SLC7A5, SLC7A6, SLC7A7, SLC7A8, SLC7A10 and SLC7A11), a group of amino-acid antiporters. Heterodimers function as amino acids exchangers, the specificity of the substrate depending on the SLC7A subunit. Heterodimers formed by SLC3A2/SLC7A6 or SLC3A2/SLC7A7 mediate the uptake of dibasic amino acids. Heterodimer SLC3A2/SLC7A11 functions as an antiporter by mediating the exchange of extracellular anionic L-cystine and intracellular L-glutamate across the cellular plasma membrane. SLC3A2/SLC7A10 translocates small neutral L- and D-amino acids across the plasma membrane. SLC3A2/SLC75 or SLC3A2/SLC7A8 translocates neutral amino acids with broad specificity, thyroid hormones and L-DOPA. SLC3A2 is essential for plasma membrane localization, stability, and the transport activity of SLC7A5 and SLC7A8. When associated with LAPTM4B, the heterodimer SLC7A5 is recruited to lysosomes to promote leucine uptake into these organelles, and thereby mediates mTORC1 activation. Modulates integrin-related signaling and is essential for integrin-dependent cell spreading, migration and tumor progression. In Rattus norvegicus (Rat), this protein is Amino acid transporter heavy chain SLC3A2.